A 587-amino-acid chain; its full sequence is Glutathione hydrolase proenzyme (587 aa).

An N-terminal signal peptide occupies residues 1 to 28 (MKRTWNVCLTALLSVLLVAGSVPFHAEA). The propeptide occupies 29-35 (KKPPKSY). Residue arginine 113 participates in L-glutamate binding. Threonine 403 acts as the Nucleophile in catalysis. Residues threonine 421, glutamate 423, glutamate 442, aspartate 445, 464-465 (SS), and 485-486 (GG) contribute to the L-glutamate site.

It belongs to the gamma-glutamyltransferase family. As to quaternary structure, this enzyme consists of two polypeptide chains, which are synthesized in precursor form from a single polypeptide. Post-translationally, cleaved by autocatalysis into a large and small subunit.

Its subcellular location is the secreted. It carries out the reaction an N-terminal (5-L-glutamyl)-[peptide] + an alpha-amino acid = 5-L-glutamyl amino acid + an N-terminal L-alpha-aminoacyl-[peptide]. The catalysed reaction is glutathione + H2O = L-cysteinylglycine + L-glutamate. It catalyses the reaction an S-substituted glutathione + H2O = an S-substituted L-cysteinylglycine + L-glutamate. The protein operates within sulfur metabolism; glutathione metabolism. Inhibited by glucose. Its function is as follows. Cleaves the gamma-glutamyl bond of extracellular glutathione (gamma-Glu-Cys-Gly), glutathione conjugates, and other gamma-glutamyl compounds. The metabolism of glutathione releases free glutamate and the dipeptide cysteinyl-glycine, which is hydrolyzed to cysteine and glycine by dipeptidases. Uses glutamine as a gamma-glutamyl donor and acceptor for gamma-polyglutamic acid synthesis. Dipeptides are better gamma-glutamyl acceptors than free amino acids. This Bacillus subtilis subsp. natto protein is Glutathione hydrolase proenzyme (ggt).